The chain runs to 373 residues: Anhydro-N-acetylmuramic acid kinase (373 aa).

Residue 13–20 coordinates ATP; it reads GTSMDGID.

The protein belongs to the anhydro-N-acetylmuramic acid kinase family.

The catalysed reaction is 1,6-anhydro-N-acetyl-beta-muramate + ATP + H2O = N-acetyl-D-muramate 6-phosphate + ADP + H(+). Its pathway is amino-sugar metabolism; 1,6-anhydro-N-acetylmuramate degradation. It functions in the pathway cell wall biogenesis; peptidoglycan recycling. Functionally, catalyzes the specific phosphorylation of 1,6-anhydro-N-acetylmuramic acid (anhMurNAc) with the simultaneous cleavage of the 1,6-anhydro ring, generating MurNAc-6-P. Is required for the utilization of anhMurNAc either imported from the medium or derived from its own cell wall murein, and thus plays a role in cell wall recycling. This chain is Anhydro-N-acetylmuramic acid kinase, found in Agrobacterium fabrum (strain C58 / ATCC 33970) (Agrobacterium tumefaciens (strain C58)).